A 347-amino-acid polypeptide reads, in one-letter code: Quinolinate synthase (347 aa).

2 residues coordinate iminosuccinate: His-47 and Ser-68. [4Fe-4S] cluster is bound at residue Cys-113. Iminosuccinate is bound by residues 139–141 (YAN) and Ser-156. Residue Cys-200 participates in [4Fe-4S] cluster binding. Iminosuccinate is bound by residues 226 to 228 (HPE) and Thr-243. Position 297 (Cys-297) interacts with [4Fe-4S] cluster.

Belongs to the quinolinate synthase family. Type 1 subfamily. [4Fe-4S] cluster is required as a cofactor.

It localises to the cytoplasm. It catalyses the reaction iminosuccinate + dihydroxyacetone phosphate = quinolinate + phosphate + 2 H2O + H(+). It participates in cofactor biosynthesis; NAD(+) biosynthesis; quinolinate from iminoaspartate: step 1/1. Functionally, catalyzes the condensation of iminoaspartate with dihydroxyacetone phosphate to form quinolinate. This Escherichia coli O157:H7 protein is Quinolinate synthase.